The chain runs to 277 residues: Endochitinase CHI (277 aa).

Positions 1 to 31 are cleaved as a signal peptide; that stretch reads MAKPTSRNDRFALFFITLIFLILTVSKPVAS. Positions 32-66 constitute a Chitin-binding type-1 domain; the sequence is QNCGCASDFCCSKYGYCGTTDEFCGEGCQAGPCRS. Cystine bridges form between C34–C42, C36–C48, C41–C55, and C59–C64. The catalytic stretch occupies residues 75 to 277; that stretch reads VSLEGTVTPD…GVAPGDNLTC (203 aa). E136 acts as the Proton donor in catalysis. An N-linked (GlcNAc...) asparagine glycan is attached at N274.

The protein belongs to the glycosyl hydrolase 19 family. Chitinase class I subfamily.

It carries out the reaction Random endo-hydrolysis of N-acetyl-beta-D-glucosaminide (1-&gt;4)-beta-linkages in chitin and chitodextrins.. This Arabidopsis thaliana (Mouse-ear cress) protein is Endochitinase CHI.